A 398-amino-acid polypeptide reads, in one-letter code: MSSTNTTPKPGNPIVYLDLAFGSSPASRPGSNRIVLELYADRVPRTAENFRVLCTNTSKLASTGQPLSFRNSIFHRVIPKFMIQGGDFTRADGTGGESIYGEKFQDEDLTGKHDVPFLLSMANAGANTNGSQFFITTVPTPHLDGKHVVFGRVLKGKGVVRRVESVETVASDRPKEDVKIVDCGELTGDEVSNQTYGIEQDDTGDQYEDFPEDQDDKLESDVSATYHIGLALKNMANTQFSKANFDIALEKYSKALRYLQLHPILPEDTPADLAANYTTLKTSIQLNACLCALKTTPAQPRVAISNATAVISNLTSNKAPSTEQADKNKYHSDLAKAFYRRASAYVAQKDDERAEADLKHALENAPEDAGVKRELQALARRKEAKLKGMRAAYSKMFS.

The PPIase cyclophilin-type domain maps to 21–185 (FGSSPASRPG…EDVKIVDCGE (165 aa)). 3 TPR repeats span residues 229 to 262 (GLALKNMANTQFSKANFDIALEKYSKALRYLQLH), 282 to 323 (TSIQ…PSTE), and 335 to 368 (AKAFYRRASAYVAQKDDERAEADLKHALENAPED).

The protein belongs to the cyclophilin-type PPIase family. PPIase D subfamily.

It is found in the cytoplasm. It catalyses the reaction [protein]-peptidylproline (omega=180) = [protein]-peptidylproline (omega=0). In terms of biological role, PPIases accelerate the folding of proteins. It catalyzes the cis-trans isomerization of proline imidic peptide bonds in oligopeptides. This chain is Peptidyl-prolyl cis-trans isomerase D (CPR6), found in Mycosarcoma maydis (Corn smut fungus).